The sequence spans 348 residues: Anthranilate phosphoribosyltransferase (348 aa).

5-phospho-alpha-D-ribose 1-diphosphate-binding positions include glycine 84, 87–88 (GD), threonine 92, 94–97 (NITT), 112–120 (KHGNRSVSS), and serine 124. Anthranilate is bound at residue glycine 84. Mg(2+) is bound at residue threonine 96. Residue asparagine 115 participates in anthranilate binding. Residue arginine 170 coordinates anthranilate. Mg(2+) is bound by residues aspartate 228 and glutamate 229.

This sequence belongs to the anthranilate phosphoribosyltransferase family. In terms of assembly, homodimer. Mg(2+) serves as cofactor.

It catalyses the reaction N-(5-phospho-beta-D-ribosyl)anthranilate + diphosphate = 5-phospho-alpha-D-ribose 1-diphosphate + anthranilate. It participates in amino-acid biosynthesis; L-tryptophan biosynthesis; L-tryptophan from chorismate: step 2/5. In terms of biological role, catalyzes the transfer of the phosphoribosyl group of 5-phosphorylribose-1-pyrophosphate (PRPP) to anthranilate to yield N-(5'-phosphoribosyl)-anthranilate (PRA). The polypeptide is Anthranilate phosphoribosyltransferase (Corynebacterium glutamicum (strain R)).